The primary structure comprises 252 residues: Outer membrane protein P1 (252 aa).

The N-terminal stretch at 1–23 (METTTKLAIGVSALCCLASAAFA) is a signal peptide.

This sequence belongs to the Coxiella porin P1 (CPP1) (TC 1.B.43) family. As to quaternary structure, may form trimers.

It is found in the cell outer membrane. Its function is as follows. Able to form a pore in lipid bilayers. In Coxiella burnetii (strain RSA 493 / Nine Mile phase I), this protein is Outer membrane protein P1 (ompP1).